Reading from the N-terminus, the 300-residue chain is Integrin-binding sialoprotein (300 aa).

The interval 41 to 258 (RFPVQSSSDS…YEQTGAHEYD (218 aa)) is disordered. 6 positions are modified to phosphoserine: serine 46, serine 51, serine 59, serine 60, serine 82, and serine 90. Low complexity predominate over residues 46 to 58 (SSSDSSEENGNGD). Acidic residues predominate over residues 59–92 (SSEEEEEEEENSNEEENNEENEDSDGNEDEDSEA). Positions 93 to 102 (ENITLSTTTL) are enriched in polar residues. A glycan (N-linked (GlcNAc...) asparagine) is linked at asparagine 94. The span at 125–136 (KAGDIGKKSAKE) shows a compositional bias: basic and acidic residues. Residues 137 to 160 (EESDEDEEEEEENEENEAEVDDNE) show a composition bias toward acidic residues. Serine 139 carries the post-translational modification Phosphoserine. 3 stretches are compositionally biased toward polar residues: residues 161 to 173 (QGTN…STEV), 193 to 202 (VTEAQGTTVA), and 229 to 243 (ISGT…TTTP). 2 N-linked (GlcNAc...) asparagine glycosylation sites follow: asparagine 164 and asparagine 169. At serine 266 the chain carries Phosphoserine. The Integrin-binding motif signature appears at 272–274 (RGD). Serine 293 carries the phosphoserine modification. 2 positions are modified to sulfotyrosine: tyrosine 299 and tyrosine 300.

As to quaternary structure, monomer. Interacts with integrins; the interaction promotes cell adhesion.

It localises to the secreted. Functionally, binds tightly to hydroxyapatite. Appears to form an integral part of the mineralized matrix. Probably important to cell-matrix interaction. Promotes adhesion and migration of various cells via the alpha-V/beta-3 integrin receptor (ITGAV:ITGB3). The sequence is that of Integrin-binding sialoprotein (IBSP) from Sus scrofa (Pig).